The primary structure comprises 306 residues: Probable cobalamin biosynthesis protein CobD (306 aa).

Helical transmembrane passes span 54 to 74 (LFGFLNVILVLAIVFFMTYEI), 88 to 108 (ISIYSIILSFSIGHKSLIEFS), 155 to 175 (ITDSIIAPLIYAAIFGLPGAF), 215 to 235 (IAGMLLIISAPFYGGNIKSAI), and 286 to 306 (SLKAVDYSVLLFLIIYTVLLM).

It belongs to the CobD/CbiB family.

It is found in the cell membrane. The protein operates within cofactor biosynthesis; adenosylcobalamin biosynthesis. Functionally, converts cobyric acid to cobinamide by the addition of aminopropanol on the F carboxylic group. This is Probable cobalamin biosynthesis protein CobD from Methanococcus maripaludis (strain C7 / ATCC BAA-1331).